We begin with the raw amino-acid sequence, 190 residues long: Dynein axonemal light chain 1 (190 aa).

The residue at position 2 (A2) is an N-acetylalanine. LRR repeat units lie at residues 49–70, 71–92, 94–115, and 116–137; these read NCEK…NGLK, NLRI…EAVG, TLEE…HVMK, and KLKI…LKLA. A Phosphoserine modification is found at S56. The LRRCT domain maps to 150–190; it reads NPLEEKHSAEGNWIDEATKRVPKLKKLDGTPVIKEDEEEES.

This sequence belongs to the dynein light chain LC1-type family. As to quaternary structure, interacts with ZMYND10 (via C-terminus). Interacts with DNAH5, a outer arm dynein heavy chain. Interacts with tubulin located within the A-tubule of the outer doublets in a ATP-independent manner. In terms of tissue distribution, expressed in the respiratory epithelium of the upper airways and the ependymal cells lining the brain ventricles.

Its subcellular location is the cytoplasm. It is found in the cytoskeleton. It localises to the cilium axoneme. Part of the multisubunit axonemal ATPase complexes that generate the force for cilia motility and govern beat frequency. Component of the outer arm dynein (ODA). May be involved in a mechanosensory feedback mechanism controlling ODA activity based on external conformational cues by tethering the outer arm dynein heavy chain (DNAH5) to the microtubule within the axoneme. Important for ciliary function in the airways and for the function of the cilia that produce the nodal flow essential for the determination of the left-right asymmetry. In Mus musculus (Mouse), this protein is Dynein axonemal light chain 1 (Dnal1).